A 429-amino-acid polypeptide reads, in one-letter code: Protein phosphatase 2C homolog 2 (429 aa).

In terms of domain architecture, PPM-type phosphatase spans 16–291 (LYGLSAMQGW…DNMTMIIIGL (276 aa)). Mn(2+) contacts are provided by Asp-64, Gly-65, Asp-233, and Asp-282. 2 disordered regions span residues 320–348 (YGKS…NDRS) and 384–429 (RDVT…SASS). Over residues 384–397 (RDVTNHLQHDKAEE) the composition is skewed to basic and acidic residues. The span at 405–419 (SESPSSANKNSSGSG) shows a compositional bias: low complexity.

The protein belongs to the PP2C family. Mg(2+) is required as a cofactor. Requires Mn(2+) as cofactor.

Its subcellular location is the cytoplasm. It is found in the nucleus. It catalyses the reaction O-phospho-L-seryl-[protein] + H2O = L-seryl-[protein] + phosphate. It carries out the reaction O-phospho-L-threonyl-[protein] + H2O = L-threonyl-[protein] + phosphate. In terms of biological role, dephosphorylating regulator for many key proteins. Dephosphorylates sakA, to negatively regulate the stress-activated p38MAPK cascade. This Aspergillus fumigatus (strain ATCC MYA-4609 / CBS 101355 / FGSC A1100 / Af293) (Neosartorya fumigata) protein is Protein phosphatase 2C homolog 2.